The sequence spans 414 residues: Clusterin-associated protein 1 (414 aa).

The stretch at 198–291 forms a coiled coil; sequence KTKDLLNNVA…ERFEEAKNTL (94 aa). Positions 305 to 414 are disordered; that stretch reads LLKSGSNDDS…EPLDESDNDF (110 aa). Composition is skewed to acidic residues over residues 312-328 and 360-389; these read DDSDVDIQEDDESDSEL and DSDDNEDSEESEIDMEDDDEDEDDDLEDES. Residues Ser-314, Ser-324, and Ser-326 each carry the phosphoserine modification. A Phosphoserine modification is found at Ser-410.

Belongs to the CLUAP1 family. In terms of assembly, interacts with CLU/clusterin. Interacts with UBXN10; the interaction is direct.

The protein resides in the cell projection. The protein localises to the cilium. It is found in the nucleus. Functionally, required for cilia biogenesis. Appears to function within the multiple intraflagellar transport complex B (IFT-B). Key regulator of hedgehog signaling. The polypeptide is Clusterin-associated protein 1 (CLUAP1) (Macaca fascicularis (Crab-eating macaque)).